The sequence spans 401 residues: Acetate kinase (401 aa).

Asn9 lines the Mg(2+) pocket. ATP is bound at residue Lys16. A substrate-binding site is contributed by Arg88. Asp147 functions as the Proton donor/acceptor in the catalytic mechanism. Residues 207–211 (HLGNG), 282–284 (DCR), and 333–337 (GIGEN) each bind ATP. Glu388 provides a ligand contact to Mg(2+).

Belongs to the acetokinase family. In terms of assembly, homodimer. Requires Mg(2+) as cofactor. It depends on Mn(2+) as a cofactor.

Its subcellular location is the cytoplasm. The enzyme catalyses acetate + ATP = acetyl phosphate + ADP. Its pathway is metabolic intermediate biosynthesis; acetyl-CoA biosynthesis; acetyl-CoA from acetate: step 1/2. In terms of biological role, catalyzes the formation of acetyl phosphate from acetate and ATP. Can also catalyze the reverse reaction. The protein is Acetate kinase of Haemophilus influenzae (strain PittEE).